The sequence spans 97 residues: MSVSIKPLEDRIVVRPLEAEQTTASGLVIPDSAQEKPQEGEVVAVGPGRFEDGNRVPVDVAVGDVVIYSKYGGTEVKTGGTEYLVLSARDVLAIVVK.

Belongs to the GroES chaperonin family. In terms of assembly, heptamer of 7 subunits arranged in a ring. Interacts with the chaperonin GroEL.

Its subcellular location is the cytoplasm. Functionally, together with the chaperonin GroEL, plays an essential role in assisting protein folding. The GroEL-GroES system forms a nano-cage that allows encapsulation of the non-native substrate proteins and provides a physical environment optimized to promote and accelerate protein folding. GroES binds to the apical surface of the GroEL ring, thereby capping the opening of the GroEL channel. The chain is Co-chaperonin GroES from Arthrobacter sp. (strain FB24).